The chain runs to 27 residues: Endoglucanase gh5 (27 aa).

Glu6 functions as the Nucleophile in the catalytic mechanism.

The catalysed reaction is Endohydrolysis of (1-&gt;4)-beta-D-glucosidic linkages in cellulose, lichenin and cereal beta-D-glucans.. With respect to regulation, activity is stimulated by zinc ions, potassium ions and DTT. Activity is inhibited by manganese and chloride ions. Its function is as follows. Endoglucanase (EG) that cleaves the internal beta-1,4-glucosidic bonds in cellulose. This Fomes meliae (Fomitopsis meliae) protein is Endoglucanase gh5.